Here is a 63-residue protein sequence, read N- to C-terminus: MYMYVNPNYVLVGGPCCGPCGGCGPCGGCGPCCGGCGPCCGPCGGCGPCCGGTSSFCGCGPCC.

It belongs to the MST(3)CGP family. As to expression, testis.

This is Male-specific sperm protein Mst84Da (Mst84Da) from Drosophila melanogaster (Fruit fly).